The sequence spans 294 residues: Large ribosomal subunit protein uL2 (294 aa).

2 disordered regions span residues 1-37 (MGIR…RPEK) and 228-294 (GSVM…RAAQ). The segment covering 10-22 (TPSTRHMTVSNFE) has biased composition (polar residues). The segment covering 23–37 (ELSRDENGKRPRPEK) has biased composition (basic and acidic residues). The span at 264-285 (KTRKRNKPSNKFIVRGRRRGGR) shows a compositional bias: basic residues.

The protein belongs to the universal ribosomal protein uL2 family. As to quaternary structure, part of the 50S ribosomal subunit. Forms a bridge to the 30S subunit in the 70S ribosome.

Its function is as follows. One of the primary rRNA binding proteins. Required for association of the 30S and 50S subunits to form the 70S ribosome, for tRNA binding and peptide bond formation. It has been suggested to have peptidyltransferase activity; this is somewhat controversial. Makes several contacts with the 16S rRNA in the 70S ribosome. The polypeptide is Large ribosomal subunit protein uL2 (Synechococcus sp. (strain JA-3-3Ab) (Cyanobacteria bacterium Yellowstone A-Prime)).